The primary structure comprises 308 residues: GATA transcription factor 10 (308 aa).

The GATA-type zinc-finger motif lies at 214–268 (DGIVRICTHCETITTPQWRQGPSGPKTLCNACGVRFKSGRLVPEYRPASSPTFIP).

This sequence belongs to the type IV zinc-finger family. Class A subfamily.

The protein resides in the nucleus. Transcriptional activator that specifically binds 5'-GATA-3' or 5'-GAT-3' motifs within gene promoters. May be involved in the regulation of some light-responsive genes. The chain is GATA transcription factor 10 (GATA10) from Arabidopsis thaliana (Mouse-ear cress).